The following is a 315-amino-acid chain: Ribosomal protein L11 methyltransferase (315 aa).

Positions 164, 185, 207, and 249 each coordinate S-adenosyl-L-methionine.

The protein belongs to the methyltransferase superfamily. PrmA family.

The protein resides in the cytoplasm. It catalyses the reaction L-lysyl-[protein] + 3 S-adenosyl-L-methionine = N(6),N(6),N(6)-trimethyl-L-lysyl-[protein] + 3 S-adenosyl-L-homocysteine + 3 H(+). In terms of biological role, methylates ribosomal protein L11. The chain is Ribosomal protein L11 methyltransferase from Lactobacillus johnsonii (strain CNCM I-12250 / La1 / NCC 533).